A 485-amino-acid chain; its full sequence is Shutoff alkaline exonuclease (485 aa).

This sequence belongs to the herpesviridae alkaline nuclease family. Forms a complex with the DNA polymerase, the DNA polymerase processivity factor, and the major DNA binding protein.

The protein localises to the host nucleus. It is found in the host cytoplasm. Functionally, plays a role in processing non linear or branched viral DNA intermediates in order to promote the production of mature packaged unit-length linear progeny viral DNA molecules. Exhibits endonuclease and exonuclease activities and accepts both double-stranded and single-stranded DNA as substrate. Exonuclease digestion of DNA is in the 5'-&gt; 3' direction and the products are 5'-monophosphate nucleosides. Additionally, forms a recombinase with the major DNA-binding protein, which displays strand exchange activity. Also acts as a cytoplasmic RNA endonuclease that induces degradation of the majority of the cellular messenger RNAs during early lytic infection. The resulting inhibition of cellular protein synthesis serves to ensure maximal viral gene expression and evasion from host immune response. Internally cleaves host mRNAs which are then degraded by the cellular exonuclease XRN1. Bypasses therefore the regulatory steps of deadenylation and decapping normally required for XRN1 activation. The sequence is that of Shutoff alkaline exonuclease (37) from Alcelaphine herpesvirus 1 (strain C500) (AlHV-1).